Consider the following 152-residue polypeptide: FMN reductase (NADH) RutF (152 aa).

The protein belongs to the non-flavoprotein flavin reductase family. RutF subfamily.

The enzyme catalyses FMNH2 + NAD(+) = FMN + NADH + 2 H(+). Its function is as follows. Catalyzes the reduction of FMN to FMNH2 which is used to reduce pyrimidine by RutA via the Rut pathway. The protein is FMN reductase (NADH) RutF of Shigella flexneri.